The primary structure comprises 257 residues: Geranylgeranylglyceryl phosphate synthase (257 aa).

Positions 27 and 57 each coordinate Mg(2+). Sn-glycerol 1-phosphate-binding positions include 175–181, 207–208, and 229–230; these read YLEAGSG, GG, and GN.

The protein belongs to the GGGP/HepGP synthase family. Group II subfamily. Mg(2+) is required as a cofactor.

The protein localises to the cytoplasm. It carries out the reaction sn-glycerol 1-phosphate + (2E,6E,10E)-geranylgeranyl diphosphate = sn-3-O-(geranylgeranyl)glycerol 1-phosphate + diphosphate. It participates in membrane lipid metabolism; glycerophospholipid metabolism. Functionally, prenyltransferase that catalyzes the transfer of the geranylgeranyl moiety of geranylgeranyl diphosphate (GGPP) to the C3 hydroxyl of sn-glycerol-1-phosphate (G1P). This reaction is the first ether-bond-formation step in the biosynthesis of archaeal membrane lipids. The polypeptide is Geranylgeranylglyceryl phosphate synthase (Sulfolobus acidocaldarius (strain ATCC 33909 / DSM 639 / JCM 8929 / NBRC 15157 / NCIMB 11770)).